The chain runs to 1237 residues: Clustered mitochondria protein homolog (1237 aa).

A Clu domain is found at 291 to 535 (DITRSQENCL…RITPLDVAWS (245 aa)). Basic and acidic residues-rich tracts occupy residues 575-597 (RKTAKREAEKTKAVEAQNEDKAE) and 845-854 (SQIKSQEHSP). Disordered stretches follow at residues 575–614 (RKTAKREAEKTKAVEAQNEDKAELLSTSDPGEGENKAVAS) and 845–886 (SQIK…VAAS). TPR repeat units follow at residues 957–990 (AKLYHQLSMLYYQTDEKEAAVELARKAVIVTERT), 999–1032 (ILSYLNLSLFEHASGNTHTALIYIRHALELWKII), and 1041–1074 (ITTMNNAAVMLQHLKKYPDSRKWFEASLTVCEGL). Disordered regions lie at residues 1152 to 1189 (RLRRTNLSPRMTIGTKPQPQVGQNAPATTNGATSKSIG) and 1201 to 1237 (FIEGGGESRSPRSKQKKRAAASNPKLRGSKQSTVQTA). Over residues 1156 to 1187 (TNLSPRMTIGTKPQPQVGQNAPATTNGATSKS) the composition is skewed to polar residues.

It belongs to the CLU family. May associate with the eukaryotic translation initiation factor 3 (eIF-3) complex.

Its subcellular location is the cytoplasm. In terms of biological role, mRNA-binding protein involved in proper cytoplasmic distribution of mitochondria. This is Clustered mitochondria protein homolog from Ajellomyces capsulatus (strain NAm1 / WU24) (Darling's disease fungus).